The primary structure comprises 192 residues: E3 ubiquitin-protein ligase RNF185 (192 aa).

Residues 1–14 show a composition bias toward polar residues; sequence MASKGPSASASTEN. The interval 1 to 30 is disordered; the sequence is MASKGPSASASTENSSAGGPSGSSNGTGES. Over 1–130 the chain is Cytoplasmic; the sequence is MASKGPSASA…GGFQGFGFGD (130 aa). Over residues 15 to 27 the composition is skewed to low complexity; it reads SSAGGPSGSSNGT. The segment at 29-80 is required for ubiquitin ligase activity and protection against ER stress-induced cell death; that stretch reads ESGGQDSTFECNICLDTAKDAVISLCGHLFCWPCLHQWLETRPNRQVCPVCK. The segment at 39–80 adopts an RING-type zinc-finger fold; it reads CNICLDTAKDAVISLCGHLFCWPCLHQWLETRPNRQVCPVCK. Residues 90 to 123 form a disordered region; sequence PLYGRGSTGQQDPREKTPPRPQGQRPEPENRGGF. Residues 131-151 form a helical membrane-spanning segment; that stretch reads GGFQMSFGIGAFPFGIFATAF. Topologically, residues 152–171 are mitochondrial intermembrane; sequence NINDGRPPPAVPGTPQYVDE. The chain crosses the membrane as a helical span at residues 172 to 192; it reads QFLSRLFLFVALVIMFWLLIA.

Interacts with ATG5 and BNIP1.

It localises to the mitochondrion outer membrane. The protein resides in the endoplasmic reticulum membrane. The enzyme catalyses S-ubiquitinyl-[E2 ubiquitin-conjugating enzyme]-L-cysteine + [acceptor protein]-L-lysine = [E2 ubiquitin-conjugating enzyme]-L-cysteine + N(6)-ubiquitinyl-[acceptor protein]-L-lysine.. Its pathway is protein modification; protein ubiquitination. Its function is as follows. E3 ubiquitin-protein ligase that regulates selective mitochondrial autophagy by mediating 'Lys-63'-linked polyubiquitination of BNIP1. Acts in the endoplasmic reticulum (ER)-associated degradation (ERAD) pathway, which targets misfolded proteins that accumulate in the endoplasmic reticulum (ER) for ubiquitination and subsequent proteasome-mediated degradation. Protects cells from ER stress-induced apoptosis. Responsible for the cotranslational ubiquitination and degradation of CFTR in the ERAD pathway. Also acts as a regulator of the innate antiviral response by catalyzing 'Lys-27'-linked polyubiquitination of CGAS, thereby promoting CGAS cyclic GMP-AMP synthase activity. Preferentially associates with the E2 enzymes UBE2J1 and UBE2J2. The sequence is that of E3 ubiquitin-protein ligase RNF185 (Rnf185) from Rattus norvegicus (Rat).